The primary structure comprises 367 residues: AA9 family lytic polysaccharide monooxygenase A (367 aa).

An N-terminal signal peptide occupies residues 1–20; sequence MKSSTFGMLALAAAAKLVSA. Histidine 21 lines the Cu(2+) pocket. The interval 37–56 is disordered; sequence GNSESGYIRSPPSNSPITDV. Cysteine 63 and cysteine 183 are joined by a disulfide. Position 102 (histidine 102) interacts with Cu(2+). Histidine 169 serves as a coordination point for O2. Tyrosine 180 is a Cu(2+) binding site. Residues 234–287 are disordered; that stretch reads GASGSSSSPSASASASAPAATSAAPAPSSFTTIAKQPATSSTEAPSTENTSTTS. 2 stretches are compositionally biased toward low complexity: residues 235 to 262 and 270 to 287; these read ASGS…APSS and PATS…STTS. A glycan (N-linked (GlcNAc...) asparagine) is linked at asparagine 282. A CBM1 domain is found at 329–365; the sequence is GAVKEWYQCGGLNYKGSTQCEEGLTCKKWNPYYYQCI.

It belongs to the polysaccharide monooxygenase AA9 family. It depends on Cu(2+) as a cofactor.

Its subcellular location is the secreted. It carries out the reaction [(1-&gt;4)-beta-D-glucosyl]n+m + reduced acceptor + O2 = 4-dehydro-beta-D-glucosyl-[(1-&gt;4)-beta-D-glucosyl]n-1 + [(1-&gt;4)-beta-D-glucosyl]m + acceptor + H2O.. Its function is as follows. Lytic polysaccharide monooxygenase (LPMO) that depolymerizes crystalline and amorphous polysaccharides via the oxidation of scissile alpha- or beta-(1-4)-glycosidic bonds, yielding C4 oxidation products. Catalysis by LPMOs requires the reduction of the active-site copper from Cu(II) to Cu(I) by a reducing agent and H(2)O(2) or O(2) as a cosubstrate. Active on cellulose and cello-oligosaccharides, as well as plant cell wall-derived hemicellulosic polysaccharides. Also active on cello-oligosaccharides such as cellohexaose, cellopentaose or cellotetraose. In Aspergillus oryzae (strain ATCC 42149 / RIB 40) (Yellow koji mold), this protein is AA9 family lytic polysaccharide monooxygenase A.